The sequence spans 440 residues: Chromosome partition protein MukF (440 aa).

The leucine-zipper stretch occupies residues Leu-208 to Ile-236.

This sequence belongs to the MukF family. Interacts, and probably forms a ternary complex, with MukE and MukB via its C-terminal region. The complex formation is stimulated by calcium or magnesium. It is required for an interaction between MukE and MukB.

It is found in the cytoplasm. It localises to the nucleoid. Its function is as follows. Involved in chromosome condensation, segregation and cell cycle progression. May participate in facilitating chromosome segregation by condensation DNA from both sides of a centrally located replisome during cell division. Not required for mini-F plasmid partitioning. Probably acts via its interaction with MukB and MukE. Overexpression results in anucleate cells. It has a calcium binding activity. In Escherichia coli (strain ATCC 8739 / DSM 1576 / NBRC 3972 / NCIMB 8545 / WDCM 00012 / Crooks), this protein is Chromosome partition protein MukF.